A 174-amino-acid polypeptide reads, in one-letter code: ATP-dependent protease subunit HslV (174 aa).

Thr-2 is an active-site residue. The Na(+) site is built by Gly-157, Cys-160, and Thr-163.

Belongs to the peptidase T1B family. HslV subfamily. As to quaternary structure, a double ring-shaped homohexamer of HslV is capped on each side by a ring-shaped HslU homohexamer. The assembly of the HslU/HslV complex is dependent on binding of ATP.

The protein resides in the cytoplasm. It catalyses the reaction ATP-dependent cleavage of peptide bonds with broad specificity.. Its activity is regulated as follows. Allosterically activated by HslU binding. In terms of biological role, protease subunit of a proteasome-like degradation complex believed to be a general protein degrading machinery. This Cellvibrio japonicus (strain Ueda107) (Pseudomonas fluorescens subsp. cellulosa) protein is ATP-dependent protease subunit HslV.